We begin with the raw amino-acid sequence, 484 residues long: Aldehyde dehydrogenase family 3 member A2 (484 aa).

The Cytoplasmic portion of the chain corresponds to 1–463 (MERQVQRLRQ…FLLKQFNKGR (463 aa)). 185 to 190 (GNTAVG) is a binding site for NAD(+). Residues Glu-207 and Cys-241 contribute to the active site. At Ser-293 the chain carries Phosphoserine. Residues 464 to 484 (LQLLLLVCLVAVAAVIVKDQL) form a helical membrane-spanning segment. The Prevents secretion from ER motif lies at 481-484 (KDQL).

The protein belongs to the aldehyde dehydrogenase family. In terms of assembly, homodimer. Post-translationally, the N-terminus is blocked.

Its subcellular location is the microsome membrane. The protein localises to the endoplasmic reticulum membrane. The catalysed reaction is an aldehyde + NAD(+) + H2O = a carboxylate + NADH + 2 H(+). It catalyses the reaction a fatty aldehyde + NAD(+) + H2O = a fatty acid + NADH + 2 H(+). It carries out the reaction (2E)-hexadecenal + NAD(+) + H2O = (E)-hexadec-2-enoate + NADH + 2 H(+). The enzyme catalyses hexadecanoate + NADH + 2 H(+) = hexadecanal + NAD(+) + H2O. The catalysed reaction is 22-oxodocosanoate + NAD(+) + H2O = docosanedioate + NADH + 2 H(+). It catalyses the reaction 2,6,10,14-tetramethylpentadecanal + NAD(+) + H2O = 2,6,10,14-tetramethylpentadecanoate + NADH + 2 H(+). It carries out the reaction octadecanal + NAD(+) + H2O = octadecanoate + NADH + 2 H(+). The enzyme catalyses dodecanoate + NADH + 2 H(+) = dodecanal + NAD(+) + H2O. The catalysed reaction is decanal + NAD(+) + H2O = decanoate + NADH + 2 H(+). It catalyses the reaction tetradecanal + NAD(+) + H2O = tetradecanoate + NADH + 2 H(+). It carries out the reaction octanal + NAD(+) + H2O = octanoate + NADH + 2 H(+). The enzyme catalyses heptanal + NAD(+) + H2O = heptanoate + NADH + 2 H(+). The catalysed reaction is (2E,6E)-farnesal + NAD(+) + H2O = (2E,6E)-farnesoate + NADH + 2 H(+). Functionally, catalyzes the oxidation of medium and long-chain aliphatic aldehydes to fatty acids. Active on a variety of saturated and unsaturated aliphatic aldehydes between 6 and 24 carbons in length. Responsible for conversion of the sphingosine 1-phosphate (S1P) degradation product hexadecenal to hexadecenoic acid. This Rattus norvegicus (Rat) protein is Aldehyde dehydrogenase family 3 member A2 (Aldh3a2).